Consider the following 452-residue polypeptide: Pup--protein ligase (452 aa).

Glutamate 9 contributes to the Mg(2+) binding site. Residue arginine 53 participates in ATP binding. Tyrosine 55 lines the Mg(2+) pocket. The active-site Proton acceptor is aspartate 57. Glutamate 63 provides a ligand contact to Mg(2+). ATP is bound by residues threonine 66 and tryptophan 419.

The protein belongs to the Pup ligase/Pup deamidase family. Pup-conjugating enzyme subfamily. Post-translationally, pupylated at an undetermined lysine residue by the prokaryotic ubiquitin-like protein Pup, which leads to its degradation by the proteasome and thereby constitutes a negative auto-regulation.

The enzyme catalyses ATP + [prokaryotic ubiquitin-like protein]-L-glutamate + [protein]-L-lysine = ADP + phosphate + N(6)-([prokaryotic ubiquitin-like protein]-gamma-L-glutamyl)-[protein]-L-lysine.. It participates in protein degradation; proteasomal Pup-dependent pathway. Its pathway is protein modification; protein pupylation. Catalyzes the covalent attachment of the prokaryotic ubiquitin-like protein modifier Pup to the proteasomal substrate proteins, thereby targeting them for proteasomal degradation. This tagging system is termed pupylation. The ligation reaction likely involves the side-chain carboxylate of the C-terminal glutamate of Pup and the side-chain amino group of a substrate lysine. The protein is Pup--protein ligase (pafA) of Mycolicibacterium smegmatis (strain ATCC 700084 / mc(2)155) (Mycobacterium smegmatis).